The following is a 499-amino-acid chain: Cytochrome P450 ARB_01131 (499 aa).

A signal peptide spans 1 to 21 (MLSLIVACLVLPLICYKLVRS). N-linked (GlcNAc...) asparagine glycosylation is present at Asn23. Position 437 (Cys437) interacts with heme.

Belongs to the cytochrome P450 family. It depends on heme as a cofactor.

Functionally, together with an NADPH cytochrome P450 the enzyme system catalyzes the terminal hydroxylation as the first step in the assimilation of alkanes and fatty acids. This is Cytochrome P450 ARB_01131 from Arthroderma benhamiae (strain ATCC MYA-4681 / CBS 112371) (Trichophyton mentagrophytes).